Reading from the N-terminus, the 128-residue chain is Histone H2A type 1-H (128 aa).

A disordered region spans residues 1-22 (MSGRGKQGGKARAKAKTRSSRA). S2 is subject to N-acetylserine. The residue at position 2 (S2) is a Phosphoserine; by RPS6KA5. R4 carries the post-translational modification Citrulline; alternate. Symmetric dimethylarginine; by PRMT5; alternate is present on R4. Residue K6 is modified to N6-(2-hydroxyisobutyryl)lysine. A compositionally biased stretch (basic residues) spans 7-19 (QGGKARAKAKTRS). N6-(2-hydroxyisobutyryl)lysine; alternate is present on K10. 2 positions are modified to N6-(beta-hydroxybutyryl)lysine; alternate: K10 and K14. At K10 the chain carries N6-lactoyllysine; alternate. K10 is modified (N6-succinyllysine; alternate). K14 participates in a covalent cross-link: Glycyl lysine isopeptide (Lys-Gly) (interchain with G-Cter in ubiquitin); alternate. A Glycyl lysine isopeptide (Lys-Gly) (interchain with G-Cter in ubiquitin) cross-link involves residue K16. K37 is modified (N6-(2-hydroxyisobutyryl)lysine; alternate). K37 carries the N6-(beta-hydroxybutyryl)lysine; alternate modification. The residue at position 37 (K37) is an N6-crotonyllysine; alternate. K75 and K76 each carry N6-(2-hydroxyisobutyryl)lysine. An N6-(2-hydroxyisobutyryl)lysine; alternate modification is found at K96. K96 carries the post-translational modification N6-(beta-hydroxybutyryl)lysine; alternate. K96 is modified (N6-succinyllysine; alternate). N6-glutaryllysine; alternate is present on K96. N6-glutaryllysine is present on K100. Q105 carries the post-translational modification N5-methylglutamine. The residue at position 119 (K119) is an N6-(2-hydroxyisobutyryl)lysine; alternate. K119 is modified (N6-(beta-hydroxybutyryl)lysine; alternate). Residues K119 and K120 each carry the N6-crotonyllysine; alternate modification. N6-glutaryllysine; alternate is present on residues K119 and K120. K120 participates in a covalent cross-link: Glycyl lysine isopeptide (Lys-Gly) (interchain with G-Cter in ubiquitin); alternate. At T121 the chain carries Phosphothreonine; by DCAF1. An N6-crotonyllysine; alternate modification is found at K126. Position 126 is an N6-glutaryllysine; alternate (K126).

This sequence belongs to the histone H2A family. The nucleosome is a histone octamer containing two molecules each of H2A, H2B, H3 and H4 assembled in one H3-H4 heterotetramer and two H2A-H2B heterodimers. The octamer wraps approximately 147 bp of DNA. In terms of processing, deiminated on Arg-4 in granulocytes upon calcium entry. Monoubiquitination of Lys-120 (H2AK119Ub) by RING1, TRIM37 and RNF2/RING2 complex gives a specific tag for epigenetic transcriptional repression and participates in X chromosome inactivation of female mammals. It is involved in the initiation of both imprinted and random X inactivation. Ubiquitinated H2A is enriched in inactive X chromosome chromatin. Ubiquitination of H2A functions downstream of methylation of 'Lys-27' of histone H3 (H3K27me). H2AK119Ub by RNF2/RING2 can also be induced by ultraviolet and may be involved in DNA repair. Monoubiquitination of Lys-120 (H2AK119Ub) by TRIM37 may promote transformation of cells in a number of breast cancers. Following DNA double-strand breaks (DSBs), it is ubiquitinated through 'Lys-63' linkage of ubiquitin moieties by the E2 ligase UBE2N and the E3 ligases RNF8 and RNF168, leading to the recruitment of repair proteins to sites of DNA damage. Ubiquitination at Lys-14 and Lys-16 (H2AK13Ub and H2AK15Ub, respectively) in response to DNA damage is initiated by RNF168 that mediates monoubiquitination at these 2 sites, and 'Lys-63'-linked ubiquitin are then conjugated to monoubiquitin; RNF8 is able to extend 'Lys-63'-linked ubiquitin chains in vitro. Deubiquitinated by USP51 at Lys-14 and Lys-16 (H2AK13Ub and H2AK15Ub, respectively) after damaged DNA is repaired. H2AK119Ub and ionizing radiation-induced 'Lys-63'-linked ubiquitination (H2AK13Ub and H2AK15Ub) are distinct events. Post-translationally, phosphorylation on Ser-2 (H2AS1ph) is enhanced during mitosis. Phosphorylation on Ser-2 by RPS6KA5/MSK1 directly represses transcription. Acetylation of H3 inhibits Ser-2 phosphorylation by RPS6KA5/MSK1. Phosphorylation at Thr-121 (H2AT120ph) by DCAF1 is present in the regulatory region of many tumor suppresor genes and down-regulates their transcription. In terms of processing, glutamine methylation at Gln-105 (H2AQ104me) by FBL is specifically dedicated to polymerase I. It is present at 35S ribosomal DNA locus and impairs binding of the FACT complex. Symmetric dimethylation on Arg-4 by the PRDM1/PRMT5 complex may play a crucial role in the germ-cell lineage. Post-translationally, crotonylation (Kcr) is specifically present in male germ cells and marks testis-specific genes in post-meiotic cells, including X-linked genes that escape sex chromosome inactivation in haploid cells. Crotonylation marks active promoters and enhancers and confers resistance to transcriptional repressors. It is also associated with post-meiotically activated genes on autosomes. In terms of processing, lactylated in macrophages by EP300/P300 by using lactoyl-CoA directly derived from endogenous or exogenous lactate, leading to stimulates gene transcription.

Its subcellular location is the nucleus. The protein resides in the chromosome. Its function is as follows. Core component of nucleosome. Nucleosomes wrap and compact DNA into chromatin, limiting DNA accessibility to the cellular machineries which require DNA as a template. Histones thereby play a central role in transcription regulation, DNA repair, DNA replication and chromosomal stability. DNA accessibility is regulated via a complex set of post-translational modifications of histones, also called histone code, and nucleosome remodeling. The sequence is that of Histone H2A type 1-H from Homo sapiens (Human).